The chain runs to 332 residues: Very-long-chain 3-oxoacyl-CoA reductase (332 aa).

A helical transmembrane segment spans residues 15–35 (GQWALAGIGALYVATRVGAFL). Residues Val60, Asp115, Asp123, Asn142, Lys177, Tyr209, Lys213, Val242, and Thr244 each coordinate NADP(+). Residue Tyr209 is the Proton donor of the active site. The active-site Lowers pKa of active site Tyr is the Lys213.

Belongs to the short-chain dehydrogenases/reductases (SDR) family.

It localises to the endoplasmic reticulum membrane. The catalysed reaction is a very-long-chain (3R)-3-hydroxyacyl-CoA + NADP(+) = a very-long-chain 3-oxoacyl-CoA + NADPH + H(+). Its pathway is lipid metabolism; fatty acid biosynthesis. In terms of biological role, component of the microsomal membrane bound fatty acid elongation system, which produces the 26-carbon very long-chain fatty acids (VLCFA) from palmitate. Catalyzes the reduction of the 3-ketoacyl-CoA intermediate that is formed in each cycle of fatty acid elongation. VLCFAs serve as precursors for ceramide and sphingolipids. The polypeptide is Very-long-chain 3-oxoacyl-CoA reductase (Neurospora crassa (strain ATCC 24698 / 74-OR23-1A / CBS 708.71 / DSM 1257 / FGSC 987)).